Reading from the N-terminus, the 4138-residue chain is Fumosorinone synthetase (4138 aa).

A Ketosynthase family 3 (KS3) domain is found at 15–455 (PEPIAIVGSA…GTNAHAIIER (441 aa)). Catalysis depends on for beta-ketoacyl synthase activity residues cysteine 189, histidine 328, and histidine 375. Residues 590-921 (VFTGQGAQWP…APDAVSFSTA (332 aa)) are malonyl-CoA:ACP transacylase (MAT) domain. The interval 990 to 1133 (HELLGRRAVD…GLIDVHLGPR (144 aa)) is N-terminal hotdog fold. The interval 990-1306 (HELLGRRAVD…GFEVRSVGER (317 aa)) is dehydratase (DH) domain. The 320-residue stretch at 990 to 1309 (HELLGRRAVD…VRSVGERDAA (320 aa)) folds into the PKS/mFAS DH domain. Histidine 1022 serves as the catalytic Proton acceptor; for dehydratase activity. Positions 1157-1309 (LQEIDCEKLY…VRSVGERDAA (153 aa)) are C-terminal hotdog fold. The Proton donor; for dehydratase activity role is filled by aspartate 1216. Residues 1456-1650 (RFYAEDKGMQ…FSGADHVAHD (195 aa)) are methyltransferase (MT) domain. Positions 2205–2379 (TYLMVGAAGG…AASIIHVGFV (175 aa)) are ketoreductase (KR) domain. The Carrier 1 domain maps to 2507-2587 (EAAAAVRRAF…QLSTLAAKLA (81 aa)). Serine 2547 carries the post-translational modification O-(pantetheine 4'-phosphoryl)serine. The disordered stretch occupies residues 2587–2683 (ARQQSPRKEG…TEPKTEDKVS (97 aa)). Over residues 2610-2621 (TQDKLVDDKEQK) the composition is skewed to basic and acidic residues. Residues 2622 to 2643 (VQVTSSLAKADSLTQEMQASAH) show a composition bias toward polar residues. Over residues 2647-2659 (DSATNPTPSSTAS) the composition is skewed to low complexity. Polar residues predominate over residues 2664-2675 (SNSQSTRSTSTE). The segment at 2701–3128 (REAPMSAAQA…ASQRVRECAV (428 aa)) is condensation (C) domain. Residues 3162–3564 (CQKNSARTAI…DGTLLCFGRI (403 aa)) are adenylation (A) (KR) domain. A Carrier 2 domain is found at 3680–3759 (EKMTIQEGEL…GMTRCVLAQR (80 aa)). Position 3719 is an O-(pantetheine 4'-phosphoryl)serine (serine 3719). The interval 3813 to 4045 (LTGATGFLGG…LDFGTVDAVV (233 aa)) is reductase (RED) domain.

In the C-terminal section; belongs to the NRP synthetase family.

Hybrid PKS-NRPS synthetase; part of the gene cluster that mediates the biosynthesis of fumosorinone, a 2-pyridone alkaloid that acts as an inhibitor of protein tyrosine phosphatase 1B which is implicated asa negative regulator of insulin receptor signaling and a potential drug target for the treatment of type II diabetes and other associated metabolic syndromes. The polyketide-amino acid backbone of fumosorinone is first assembled by the PKS-NRPS hybrid fumoS. The PKS modules condense one acetyl-CoA starter unit with 7 malonyl-CoA units, programmed C-methylations occurring after the first 3 and the sixth extensions, and cycles of full reduction occurring after the first 2 extensions. Because fumoS lacks a designated enoyl reductase (ER) domain, the required activity is provided the enoyl reductase fumoC. Upon formation of the polyketide backbone on the thiotemplate, the polyketide is transferred to the NRPS module and linked to tyrosine to produce the acyltetramic acid intermediate called prefumosorinone A. The cytochrome P450 monooxygenase fumoA then probably catalyzes an unprecedented oxidative ring expansion of prefumosorinone A to form prefumosorinone B which contains the 2-pyridone core of fumosorinone. The cytochrome P450 monooxygenase fumoB might hydroxylate the nitrogen of prefumosorinone B, but not the acyltetramic acid prefumosorinone A, to form fumosorinone. The polypeptide is Fumosorinone synthetase (Cordyceps fumosorosea (strain ARSEF 2679) (Isaria fumosorosea)).